The chain runs to 423 residues: Histidine--tRNA ligase (423 aa).

It belongs to the class-II aminoacyl-tRNA synthetase family. As to quaternary structure, homodimer.

The protein localises to the cytoplasm. It catalyses the reaction tRNA(His) + L-histidine + ATP = L-histidyl-tRNA(His) + AMP + diphosphate + H(+). The sequence is that of Histidine--tRNA ligase (hisS) from Haemophilus influenzae (strain ATCC 51907 / DSM 11121 / KW20 / Rd).